The chain runs to 635 residues: Threonine--tRNA ligase (635 aa).

The TGS domain occupies 1–61; that stretch reads MIAITLPDGS…DRDAELAIVT (61 aa). The tract at residues 242–533 is catalytic; it reads DHRKLGKTLD…LLENHAGALP (292 aa). Cys333, His384, and His510 together coordinate Zn(2+).

It belongs to the class-II aminoacyl-tRNA synthetase family. As to quaternary structure, homodimer. The cofactor is Zn(2+).

The protein resides in the cytoplasm. The catalysed reaction is tRNA(Thr) + L-threonine + ATP = L-threonyl-tRNA(Thr) + AMP + diphosphate + H(+). Catalyzes the attachment of threonine to tRNA(Thr) in a two-step reaction: L-threonine is first activated by ATP to form Thr-AMP and then transferred to the acceptor end of tRNA(Thr). Also edits incorrectly charged L-seryl-tRNA(Thr). The polypeptide is Threonine--tRNA ligase (Cupriavidus necator (strain ATCC 17699 / DSM 428 / KCTC 22496 / NCIMB 10442 / H16 / Stanier 337) (Ralstonia eutropha)).